The chain runs to 79 residues: Cytochrome c-551 (79 aa).

Residues 1 to 14 (DGQSIYESGTSPTC) show a composition bias toward polar residues. The interval 1-35 (DGQSIYESGTSPTCASCHDRGTAGAPKINEPGDWD) is disordered. The heme c site is built by C14, C17, H18, and M55.

Post-translationally, binds 1 heme c group covalently per subunit.

The sequence is that of Cytochrome c-551 from Halorhodospira halochloris (Ectothiorhodospira halochloris).